A 300-amino-acid chain; its full sequence is Estradiol 17-beta-dehydrogenase 11 (300 aa).

Positions 1–19 are cleaved as a signal peptide; the sequence is MKFLLDILLLLPLLIVCSL. 40 to 64 is an NADP(+) binding site; the sequence is LITGAGHGIGRLTAYEFAKLKSKLV. Serine 172 lines the substrate pocket. Tyrosine 185 functions as the Proton acceptor in the catalytic mechanism.

Belongs to the short-chain dehydrogenases/reductases (SDR) family. 17-beta-HSD 3 subfamily. As to expression, present at high level in steroidogenic cells such as syncytiotrophoblasts, sebaceous gland, Leydig cells, and granulosa cells of the dominant follicle and corpus luteum. In lung, it is detected in the ciliated epithelium and in acini of adult trachea, in bronchioles, but not in alveoli. In the eye, it is detected in the nonpigmented epithelium of the ciliary body and, at lower level, in the inner nuclear layer of the retina (at protein level). Widely expressed. Highly expressed in retina, pancreas, kidney, liver, lung, adrenal, small intestine, ovary and heart.

Its subcellular location is the endoplasmic reticulum. It localises to the lipid droplet. It carries out the reaction 17beta-estradiol + NAD(+) = estrone + NADH + H(+). The catalysed reaction is 17beta-estradiol + NADP(+) = estrone + NADPH + H(+). Functionally, can convert androstan-3-alpha,17-beta-diol (3-alpha-diol) to androsterone in vitro, suggesting that it may participate in androgen metabolism during steroidogenesis. May act by metabolizing compounds that stimulate steroid synthesis and/or by generating metabolites that inhibit it. Has no activity toward DHEA (dehydroepiandrosterone), or A-dione (4-androste-3,17-dione), and only a slight activity toward testosterone to A-dione. Tumor-associated antigen in cutaneous T-cell lymphoma. The protein is Estradiol 17-beta-dehydrogenase 11 (HSD17B11) of Homo sapiens (Human).